The following is a 160-amino-acid chain: Transcriptional regulator MraZ (160 aa).

2 consecutive SpoVT-AbrB domains span residues 5-50 and 93-136; these read KFDT…GDQV and AVEC…SQAV.

The protein belongs to the MraZ family. In terms of assembly, forms oligomers.

The protein localises to the cytoplasm. Its subcellular location is the nucleoid. The polypeptide is Transcriptional regulator MraZ (Geobacter sp. (strain M21)).